We begin with the raw amino-acid sequence, 364 residues long: Protein Bop (364 aa).

Residues 66–88 (STASGTCGGKPAERGPLAGHMPS) form a disordered region. Residues 114 to 128 (LDRFLAQLGDYMSFH) carry the BH3 motif. The segment at 258 to 364 (QLTKESTPGP…PGEPPLSPGF (107 aa)) is disordered. 2 stretches are compositionally biased toward pro residues: residues 311 to 322 (AQRPDPAHPGGP) and 355 to 364 (PGEPPLSPGF).

In terms of assembly, interacts (via BH3 domain) with VDAC1. Interacts with pro-survival Bcl-2 family members, BCL2, BCL2L1 isoform Bcl-X(L), MCL1, BCL2A1 and BCL2L2. Interacts with BAX and BAK1. Ubiquitously expressed.

The protein resides in the mitochondrion. Could induce apoptosis in a BH3 domain-dependent manner. The direct interaction network of Bcl-2 family members may play a key role in modulation RTL10/BOP intrinsic apoptotic signaling activity. The sequence is that of Protein Bop from Homo sapiens (Human).